Here is a 188-residue protein sequence, read N- to C-terminus: Large ribosomal subunit protein eL18 (188 aa).

K119 is covalently cross-linked (Glycyl lysine isopeptide (Lys-Gly) (interchain with G-Cter in SUMO2)). The residue at position 130 (S130) is a Phosphoserine. A disordered region spans residues 150-188 (RHFGKAPGTPHSHTKPYVRSKGRKFERARGRRASRGYKN). T158 is subject to Phosphothreonine. Composition is skewed to basic residues over residues 161-171 (SHTKPYVRSKG) and 178-188 (RGRRASRGYKN). A Glycyl lysine isopeptide (Lys-Gly) (interchain with G-Cter in SUMO2) cross-link involves residue K164.

The protein belongs to the eukaryotic ribosomal protein eL18 family. Component of the large ribosomal subunit.

Its subcellular location is the cytoplasm. It localises to the cytosol. The protein resides in the rough endoplasmic reticulum. Functionally, component of the large ribosomal subunit. The ribosome is a large ribonucleoprotein complex responsible for the synthesis of proteins in the cell. This Mus musculus (Mouse) protein is Large ribosomal subunit protein eL18 (Rpl18).